Consider the following 152-residue polypeptide: Transcriptional regulator MraZ (152 aa).

2 consecutive SpoVT-AbrB domains span residues 5-52 and 81-124; these read ASAI…PLDE and AHEC…DETA.

This sequence belongs to the MraZ family. Forms oligomers.

It is found in the cytoplasm. The protein resides in the nucleoid. The polypeptide is Transcriptional regulator MraZ (Shewanella woodyi (strain ATCC 51908 / MS32)).